The chain runs to 172 residues: Spore coat protein X (172 aa).

The protein localises to the spore coat. The chain is Spore coat protein X (cotX) from Bacillus subtilis (strain 168).